A 415-amino-acid chain; its full sequence is Glutamyl-tRNA reductase (415 aa).

Substrate contacts are provided by residues 49–52, Ser104, 109–111, and Gln115; these read TCNR and EPQ. Cys50 (nucleophile) is an active-site residue. Residue 184–189 participates in NADP(+) binding; that stretch reads GAGEMI.

It belongs to the glutamyl-tRNA reductase family. Homodimer.

The enzyme catalyses (S)-4-amino-5-oxopentanoate + tRNA(Glu) + NADP(+) = L-glutamyl-tRNA(Glu) + NADPH + H(+). It participates in porphyrin-containing compound metabolism; protoporphyrin-IX biosynthesis; 5-aminolevulinate from L-glutamyl-tRNA(Glu): step 1/2. Its function is as follows. Catalyzes the NADPH-dependent reduction of glutamyl-tRNA(Glu) to glutamate 1-semialdehyde (GSA). The sequence is that of Glutamyl-tRNA reductase from Neisseria meningitidis serogroup B (strain ATCC BAA-335 / MC58).